A 241-amino-acid chain; its full sequence is tRNA pseudouridine synthase A (241 aa).

Catalysis depends on Asp-52, which acts as the Nucleophile. Tyr-110 contacts substrate.

It belongs to the tRNA pseudouridine synthase TruA family. Homodimer.

It carries out the reaction uridine(38/39/40) in tRNA = pseudouridine(38/39/40) in tRNA. Formation of pseudouridine at positions 38, 39 and 40 in the anticodon stem and loop of transfer RNAs. The sequence is that of tRNA pseudouridine synthase A from Aquifex aeolicus (strain VF5).